The sequence spans 184 residues: Large ribosomal subunit protein bL17 (184 aa).

A disordered region spans residues 126–184 (TRAARAAASKQTADEAQVEETPAEEVTEETAAEETTEAAQADEAPAEEAPVEEKKDEEK). A compositionally biased stretch (acidic residues) spans 141–161 (AQVEETPAEEVTEETAAEETT).

The protein belongs to the bacterial ribosomal protein bL17 family. As to quaternary structure, part of the 50S ribosomal subunit. Contacts protein L32.

The sequence is that of Large ribosomal subunit protein bL17 from Corynebacterium efficiens (strain DSM 44549 / YS-314 / AJ 12310 / JCM 11189 / NBRC 100395).